Here is a 216-residue protein sequence, read N- to C-terminus: Phosphatidylserine decarboxylase proenzyme (216 aa).

S182 functions as the Schiff-base intermediate with substrate; via pyruvic acid in the catalytic mechanism. At S182 the chain carries Pyruvic acid (Ser); by autocatalysis.

This sequence belongs to the phosphatidylserine decarboxylase family. PSD-A subfamily. In terms of assembly, heterodimer of a large membrane-associated beta subunit and a small pyruvoyl-containing alpha subunit. Pyruvate is required as a cofactor. Post-translationally, is synthesized initially as an inactive proenzyme. Formation of the active enzyme involves a self-maturation process in which the active site pyruvoyl group is generated from an internal serine residue via an autocatalytic post-translational modification. Two non-identical subunits are generated from the proenzyme in this reaction, and the pyruvate is formed at the N-terminus of the alpha chain, which is derived from the carboxyl end of the proenzyme. The post-translation cleavage follows an unusual pathway, termed non-hydrolytic serinolysis, in which the side chain hydroxyl group of the serine supplies its oxygen atom to form the C-terminus of the beta chain, while the remainder of the serine residue undergoes an oxidative deamination to produce ammonia and the pyruvoyl prosthetic group on the alpha chain.

Its subcellular location is the cell membrane. The catalysed reaction is a 1,2-diacyl-sn-glycero-3-phospho-L-serine + H(+) = a 1,2-diacyl-sn-glycero-3-phosphoethanolamine + CO2. The protein operates within phospholipid metabolism; phosphatidylethanolamine biosynthesis; phosphatidylethanolamine from CDP-diacylglycerol: step 2/2. Catalyzes the formation of phosphatidylethanolamine (PtdEtn) from phosphatidylserine (PtdSer). The protein is Phosphatidylserine decarboxylase proenzyme of Burkholderia pseudomallei (strain 1106a).